The primary structure comprises 184 residues: Protein MEH1 (184 aa).

The N-myristoyl glycine moiety is linked to residue glycine 2. Residues cysteine 7 and cysteine 8 are each lipidated (S-palmitoyl cysteine). Residues 30 to 71 (QGNANDEYDAEQMRLKEHEHEQKLLAREQELRDIVANTNDKL) are a coiled coil. Residues 89-147 (LQEALDKRQQEEGGDSREDERSAGDDNLSGHSVPSSGSAQATTHQTAPRTNTFTLLTSP) form a disordered region. A compositionally biased stretch (basic and acidic residues) spans 92–112 (ALDKRQQEEGGDSREDERSAG). The segment covering 117–147 (SGHSVPSSGSAQATTHQTAPRTNTFTLLTSP) has biased composition (polar residues). Phosphoserine occurs at positions 146 and 149.

In terms of assembly, component of the GSE complex composed of GTR1, GTR2, SLM4, MEH1 and LTV1. Component of the EGO complex, at least composed of GTR2, SLM4 and MEH1.

It localises to the vacuole membrane. Functionally, component of the GSE complex, a GTPase complex required for intracellular sorting of GAP1 out of the endosome. Component of the EGO complex, a complex involved in the regulation of microautophagy. This Saccharomyces cerevisiae (strain ATCC 204508 / S288c) (Baker's yeast) protein is Protein MEH1 (MEH1).